The following is a 414-amino-acid chain: Schlafen-like protein 1 (414 aa).

Residues 141–203 (LHHREQDDSG…ISQNRPSGVR (63 aa)) are disordered. Residues 154–185 (SHSPGPSPGPSPGPSPGFRRPPLPQLADPPPN) show a composition bias toward pro residues. ATP is bound at residue 268-275 (GVEDSGLV). A coiled-coil region spans residues 373–407 (RQKWTAELSKLEEKVDVLTLEKEQLQEQLRQRQTL).

This sequence belongs to the Schlafen family. Subgroup I subfamily.

In Rattus norvegicus (Rat), this protein is Schlafen-like protein 1 (Slfnl1).